Reading from the N-terminus, the 72-residue chain is DNA-directed RNA polymerase subunit Rpo10 (72 aa).

Zn(2+) is bound by residues C7, C10, C54, and C55.

Belongs to the archaeal Rpo10/eukaryotic RPB10 RNA polymerase subunit family. As to quaternary structure, part of the RNA polymerase complex. It depends on Zn(2+) as a cofactor.

It localises to the cytoplasm. The catalysed reaction is RNA(n) + a ribonucleoside 5'-triphosphate = RNA(n+1) + diphosphate. Functionally, DNA-dependent RNA polymerase (RNAP) catalyzes the transcription of DNA into RNA using the four ribonucleoside triphosphates as substrates. This is DNA-directed RNA polymerase subunit Rpo10 from Picrophilus torridus (strain ATCC 700027 / DSM 9790 / JCM 10055 / NBRC 100828 / KAW 2/3).